The chain runs to 545 residues: Glucose-6-phosphate isomerase (545 aa).

The active-site Proton donor is Glu-351. Active-site residues include His-382 and Lys-510.

Belongs to the GPI family.

It is found in the cytoplasm. The enzyme catalyses alpha-D-glucose 6-phosphate = beta-D-fructose 6-phosphate. The protein operates within carbohydrate biosynthesis; gluconeogenesis. It functions in the pathway carbohydrate degradation; glycolysis; D-glyceraldehyde 3-phosphate and glycerone phosphate from D-glucose: step 2/4. In terms of biological role, catalyzes the reversible isomerization of glucose-6-phosphate to fructose-6-phosphate. This is Glucose-6-phosphate isomerase from Helicobacter pylori (strain P12).